A 740-amino-acid chain; its full sequence is Phosphoribosylformylglycinamidine synthase subunit PurL (740 aa).

H54 is a catalytic residue. Residues Y57 and K96 each coordinate ATP. E98 lines the Mg(2+) pocket. Substrate-binding positions include 99–102 (SHNH) and R121. The Proton acceptor role is filled by H100. A Mg(2+)-binding site is contributed by D122. A substrate-binding site is contributed by Q245. Residue D273 coordinates Mg(2+). A substrate-binding site is contributed by 317 to 319 (ESQ). Positions 499 and 536 each coordinate ATP. N537 contacts Mg(2+). Residue S539 participates in substrate binding.

This sequence belongs to the FGAMS family. Monomer. Part of the FGAM synthase complex composed of 1 PurL, 1 PurQ and 2 PurS subunits.

It is found in the cytoplasm. It carries out the reaction N(2)-formyl-N(1)-(5-phospho-beta-D-ribosyl)glycinamide + L-glutamine + ATP + H2O = 2-formamido-N(1)-(5-O-phospho-beta-D-ribosyl)acetamidine + L-glutamate + ADP + phosphate + H(+). Its pathway is purine metabolism; IMP biosynthesis via de novo pathway; 5-amino-1-(5-phospho-D-ribosyl)imidazole from N(2)-formyl-N(1)-(5-phospho-D-ribosyl)glycinamide: step 1/2. Its function is as follows. Part of the phosphoribosylformylglycinamidine synthase complex involved in the purines biosynthetic pathway. Catalyzes the ATP-dependent conversion of formylglycinamide ribonucleotide (FGAR) and glutamine to yield formylglycinamidine ribonucleotide (FGAM) and glutamate. The FGAM synthase complex is composed of three subunits. PurQ produces an ammonia molecule by converting glutamine to glutamate. PurL transfers the ammonia molecule to FGAR to form FGAM in an ATP-dependent manner. PurS interacts with PurQ and PurL and is thought to assist in the transfer of the ammonia molecule from PurQ to PurL. The polypeptide is Phosphoribosylformylglycinamidine synthase subunit PurL (Anoxybacillus flavithermus (strain DSM 21510 / WK1)).